The following is a 130-amino-acid chain: Small ribosomal subunit protein uS9 (130 aa).

Belongs to the universal ribosomal protein uS9 family.

This Streptococcus suis (strain 98HAH33) protein is Small ribosomal subunit protein uS9.